We begin with the raw amino-acid sequence, 111 residues long: uncharacterized protein (111 aa).

A disordered region spans residues 43–72 (NGRAEETEADAPLPEEPSLPDLPDLSDLDS). The segment covering 61–72 (LPDLPDLSDLDS) has biased composition (low complexity).

This is an uncharacterized protein from Homo sapiens (Human).